A 343-amino-acid polypeptide reads, in one-letter code: Ribosomal RNA small subunit methyltransferase C (343 aa).

The protein belongs to the methyltransferase superfamily. RsmC family. As to quaternary structure, monomer.

Its subcellular location is the cytoplasm. The catalysed reaction is guanosine(1207) in 16S rRNA + S-adenosyl-L-methionine = N(2)-methylguanosine(1207) in 16S rRNA + S-adenosyl-L-homocysteine + H(+). Functionally, specifically methylates the guanine in position 1207 of 16S rRNA in the 30S particle. The protein is Ribosomal RNA small subunit methyltransferase C of Escherichia coli O81 (strain ED1a).